The primary structure comprises 953 residues: UvrABC system protein A (953 aa).

33-40 (GLSGSGKS) contributes to the ATP binding site. ABC transporter domains are found at residues 320–599 (WGST…EESI) and 619–949 (GHDN…RYLK). 652–659 (GVSGSGKS) lines the ATP pocket. The C4-type zinc-finger motif lies at 752–778 (CEACQGDGLIKIEMHFLPDVYVKCDIC).

It belongs to the ABC transporter superfamily. UvrA family. As to quaternary structure, forms a heterotetramer with UvrB during the search for lesions.

Its subcellular location is the cytoplasm. In terms of biological role, the UvrABC repair system catalyzes the recognition and processing of DNA lesions. UvrA is an ATPase and a DNA-binding protein. A damage recognition complex composed of 2 UvrA and 2 UvrB subunits scans DNA for abnormalities. When the presence of a lesion has been verified by UvrB, the UvrA molecules dissociate. The protein is UvrABC system protein A of Rickettsia typhi (strain ATCC VR-144 / Wilmington).